The following is a 77-amino-acid chain: Large ribosomal subunit protein uL29 (77 aa).

This sequence belongs to the universal ribosomal protein uL29 family.

This Mycobacterium sp. (strain JLS) protein is Large ribosomal subunit protein uL29.